A 110-amino-acid polypeptide reads, in one-letter code: Cell division protein FtsB (110 aa).

Over 1–3 (MRL) the chain is Cytoplasmic. The chain crosses the membrane as a helical span at residues 4 to 21 (IILCLAALVLLIQFPLWL). The Periplasmic portion of the chain corresponds to 22 to 110 (GKGGWLRVWD…PPKIEPKEKR (89 aa)). Residues 31-64 (DLDQQVIAAQKKNDELRARNAKLNSEVQDLKEGT) are a coiled coil.

This sequence belongs to the FtsB family. In terms of assembly, part of a complex composed of FtsB, FtsL and FtsQ.

The protein resides in the cell inner membrane. Essential cell division protein. May link together the upstream cell division proteins, which are predominantly cytoplasmic, with the downstream cell division proteins, which are predominantly periplasmic. The protein is Cell division protein FtsB of Herminiimonas arsenicoxydans.